A 165-amino-acid chain; its full sequence is Phosphopantetheine adenylyltransferase (165 aa).

Residue T9 coordinates substrate. Residues 9 to 10 and H17 contribute to the ATP site; that span reads TF. Substrate-binding residues include K41, L73, and R87. Residues 88–90, E98, and 123–129 contribute to the ATP site; these read GLR and YMFISAT.

This sequence belongs to the bacterial CoaD family. Homohexamer. The cofactor is Mg(2+).

It localises to the cytoplasm. The catalysed reaction is (R)-4'-phosphopantetheine + ATP + H(+) = 3'-dephospho-CoA + diphosphate. It participates in cofactor biosynthesis; coenzyme A biosynthesis; CoA from (R)-pantothenate: step 4/5. Its function is as follows. Reversibly transfers an adenylyl group from ATP to 4'-phosphopantetheine, yielding dephospho-CoA (dPCoA) and pyrophosphate. The protein is Phosphopantetheine adenylyltransferase of Nitrosospira multiformis (strain ATCC 25196 / NCIMB 11849 / C 71).